Reading from the N-terminus, the 944-residue chain is MEYNFREIEKKWQQRWVEEKTYQVTEDESKQKFYVLNMFPYPSGAGLHVGHPLGYIASDIYARYKRLRGFNVLNPMGYDAYGLPAEQYAIQTGQHPAITTKANIDRYREQLDKIGFSFDWSREIRTCEPEYYHWTQWAFQKMFNSYYCNDEQQARPIQELIDAFAIYGNEGLNAACSEELSFTAKEWKAKSEKEQQEILMNYRIAYLGETMVNWCQALGTVLANDEVIDGVSERGGFPVVQKKMRQWCLRVSAYAQRLLDGLDTIDWTESLKETQKNWIGRSEGAEVQFKVKDSDLEFTIFTTRADTMFGVTFMVLAPESDLVAQLTTPAQKAEVDAYLDRTKKRTERERIADRSVTGVFSGSYAINPFTGEAVPIWISDYVLAGYGTGAIMAVPAHDSRDYAFAKHFGLEIRPLVEGCDVSEESFDAKEGIVCNSPRPDVTPYCDLSLNGLTIKEAIEKTKQYVKEHNLGRVKVNYRLRDAIFSRQRYWGEPFPVYYKDGMPYMIDEDCLPLELPEVDKFLPTETGEPPLGHAKEWAWDTVNKCTVENEKIDNVTIFPLELNTMPGFAGSSAYYLRYMDPHNNKALVDPKVDEYWKNVDLYVGGTEHATGHLIYSRFWNKFLHDVGASVVEEPFQKLVNQGMIQGRSNFVYRIKDTHTFVSLNLKDQYEVTPLHVDVNIVSNDILDLEAFKAWRPEYAEAEFILEDGKYICGWAVEKMSKSMFNVVNPDMIVDKYGADTLRMYEMFLGPVEQSKPWDTNGIDGVHRFIRKFWSLFYSRTDEYLVKDEPATKEELKSLHKLIKKVTGDIEQFSYNTSVSAFMICVNELSNLKCNKKEILEQLVITLAPFAPHVCEELWDTLGHETSVCDAAWPAYNEEYLKEDTINYTISFNGKARFNMEFDADAASDAIQAAVLADERSQKWIEGKTPKKIIVVPKKIVNVVV.

Positions 40 to 51 (PYPSGAGLHVGH) match the 'HIGH' region motif. Positions 718 to 722 (KMSKS) match the 'KMSKS' region motif. Lys-721 contributes to the ATP binding site.

The protein belongs to the class-I aminoacyl-tRNA synthetase family.

The protein localises to the cytoplasm. It catalyses the reaction tRNA(Leu) + L-leucine + ATP = L-leucyl-tRNA(Leu) + AMP + diphosphate. This is Leucine--tRNA ligase from Bacteroides thetaiotaomicron (strain ATCC 29148 / DSM 2079 / JCM 5827 / CCUG 10774 / NCTC 10582 / VPI-5482 / E50).